Reading from the N-terminus, the 204-residue chain is Methylthioribulose-1-phosphate dehydratase (204 aa).

Residues histidine 94 and histidine 96 each coordinate Zn(2+).

The protein belongs to the aldolase class II family. MtnB subfamily. Zn(2+) serves as cofactor.

The catalysed reaction is 5-(methylsulfanyl)-D-ribulose 1-phosphate = 5-methylsulfanyl-2,3-dioxopentyl phosphate + H2O. The protein operates within amino-acid biosynthesis; L-methionine biosynthesis via salvage pathway; L-methionine from S-methyl-5-thio-alpha-D-ribose 1-phosphate: step 2/6. Catalyzes the dehydration of methylthioribulose-1-phosphate (MTRu-1-P) into 2,3-diketo-5-methylthiopentyl-1-phosphate (DK-MTP-1-P). The polypeptide is Methylthioribulose-1-phosphate dehydratase (Serratia proteamaculans (strain 568)).